Reading from the N-terminus, the 445-residue chain is tRNA modification GTPase MnmE (445 aa).

R20, E79, and K119 together coordinate (6S)-5-formyl-5,6,7,8-tetrahydrofolate. The TrmE-type G domain maps to 215 to 371 (GLKLAIIGPP…ILKNIENIAE (157 aa)). A K(+)-binding site is contributed by N225. GTP-binding positions include 225–230 (NTGKSS), 244–250 (SNIAGTT), and 269–272 (DTAG). Residue S229 participates in Mg(2+) binding. Positions 244, 246, and 249 each coordinate K(+). T250 serves as a coordination point for Mg(2+). K445 lines the (6S)-5-formyl-5,6,7,8-tetrahydrofolate pocket.

This sequence belongs to the TRAFAC class TrmE-Era-EngA-EngB-Septin-like GTPase superfamily. TrmE GTPase family. In terms of assembly, homodimer. Heterotetramer of two MnmE and two MnmG subunits. K(+) serves as cofactor.

It is found in the cytoplasm. Its function is as follows. Exhibits a very high intrinsic GTPase hydrolysis rate. Involved in the addition of a carboxymethylaminomethyl (cmnm) group at the wobble position (U34) of certain tRNAs, forming tRNA-cmnm(5)s(2)U34. This Rickettsia typhi (strain ATCC VR-144 / Wilmington) protein is tRNA modification GTPase MnmE.